The following is a 628-amino-acid chain: MTTIDTASETKPFQAEVAELLNLMVHSVYSETDIFLRELISNASDALDKLRYESIANPALMADGGEPKIRIVPKKAPDTLTVIDNGIGMDRQELIDNLGTIAKSGTKSFLTKLTEAKDGAGLIGQFGVGFYAAFMVADSITVTSRRAGSAEAWTWSSSGGAGFEIAPASEEAAARIERGTEIVLHLKPDAAKYLEAYQIERIVSEYSDNIQFPIELVPEDGEPRQINSASALWQRSKSELTEEDYKQAYKQVAGAFDEPAMTLHYRAEGRQSYAVLLFAPSTKPFDLFEPERKGRVKLYVRRVFITADADLLPPYLRFLRGVIDSEDLPLNLSREMLQNNPQLAQIRKAVTGKVIGELDSLADKQPEQFAKIWDAFGPVIKEGLYEDYERREKLLSLARFTTTAGEKRSLAQYVEAMKENQTEIYYLVGDSLDRLKANPKLESAAARGIEVLLLTDAVDAFWTSGGLDFGGKPLKSLSQGEVNFDLIPKLDADKAEDKPDEAKADEATVIAVIKDALGDRVSDVKASQRLTASASCLVAGGFGPDRELEKMLARANKGAATKPVLEINLGHPLVAALADTKADKADATDLSFLLLEQAQILDGELPEDPAAFAGRLNRLVLRGVVAHG.

The segment at 1–334 (MTTIDTASET…SEDLPLNLSR (334 aa)) is a; substrate-binding. The b stretch occupies residues 335-550 (EMLQNNPQLA…GFGPDRELEK (216 aa)). Residues 551–628 (MLARANKGAA…LVLRGVVAHG (78 aa)) form a c region.

This sequence belongs to the heat shock protein 90 family. In terms of assembly, homodimer.

Its subcellular location is the cytoplasm. In terms of biological role, molecular chaperone. Has ATPase activity. The chain is Chaperone protein HtpG from Rhodopseudomonas palustris (strain HaA2).